Reading from the N-terminus, the 378-residue chain is Copper-containing nitrite reductase (378 aa).

Positions 1–38 (MTEQLQMTRRTMLAGAALAGAVAPLLHTAQAHAAGAAA) form a signal peptide, tat-type signal. Plastocyanin-like domains follow at residues 39–213 (AAGA…YDKI) and 214–378 (YYVG…PASM). The Cu cation site is built by histidine 133, histidine 138, histidine 173, cysteine 174, histidine 183, methionine 188, and histidine 344.

The protein belongs to the multicopper oxidase family. As to quaternary structure, homotrimer. The cofactor is Cu(+). Requires Cu(2+) as cofactor. It depends on FAD as a cofactor. In terms of processing, predicted to be exported by the Tat system. The position of the signal peptide cleavage has been experimentally proven.

It localises to the periplasm. It carries out the reaction nitric oxide + Fe(III)-[cytochrome c] + H2O = Fe(II)-[cytochrome c] + nitrite + 2 H(+). The protein operates within nitrogen metabolism; nitrate reduction (denitrification); dinitrogen from nitrate: step 2/4. The chain is Copper-containing nitrite reductase (nirK) from Achromobacter cycloclastes.